Reading from the N-terminus, the 491-residue chain is uncharacterized protein (491 aa).

Trp-99 serves as a coordination point for substrate. Ca(2+) is bound at residue Asn-137. His-138 contacts substrate. Residues Glu-177 and Asp-190 each coordinate Ca(2+). Residue Arg-219 participates in substrate binding. 3 residues coordinate Ca(2+): Asp-221, His-225, and Glu-245. Asp-221 acts as the Nucleophile in catalysis. Position 224-225 (224-225) interacts with substrate; it reads KH. Catalysis depends on Glu-245, which acts as the Proton donor. Residues Gly-249, His-312, and Arg-360 each contribute to the substrate site.

This sequence belongs to the glycosyl hydrolase 13 family. Requires Ca(2+) as cofactor.

The protein resides in the cytoplasm. Its subcellular location is the nucleus. This is an uncharacterized protein from Schizosaccharomyces pombe (strain 972 / ATCC 24843) (Fission yeast).